The following is a 213-amino-acid chain: Large ribosomal subunit protein uL3 (213 aa).

Residues 130 to 161 (KRGNMTHGSKNHRLPGSTGAGTTPGRVYPGKR) are disordered.

It belongs to the universal ribosomal protein uL3 family. In terms of assembly, part of the 50S ribosomal subunit. Forms a cluster with proteins L14 and L19.

Its function is as follows. One of the primary rRNA binding proteins, it binds directly near the 3'-end of the 23S rRNA, where it nucleates assembly of the 50S subunit. This Picosynechococcus sp. (strain ATCC 27264 / PCC 7002 / PR-6) (Agmenellum quadruplicatum) protein is Large ribosomal subunit protein uL3.